A 186-amino-acid polypeptide reads, in one-letter code: uncharacterized protein (186 aa).

Positions 1–21 are cleaved as a signal peptide; sequence MIHVKYIILGFIMVSSLNLYA.

This is an uncharacterized protein from Rickettsia conorii (strain ATCC VR-613 / Malish 7).